Reading from the N-terminus, the 506-residue chain is Cobyric acid synthase (506 aa).

The 200-residue stretch at 254–453 (DLDIAVIRLP…IHGIFESDSF (200 aa)) folds into the GATase cobBQ-type domain. Catalysis depends on Cys334, which acts as the Nucleophile. His445 is a catalytic residue.

This sequence belongs to the CobB/CobQ family. CobQ subfamily.

Its pathway is cofactor biosynthesis; adenosylcobalamin biosynthesis. Catalyzes amidations at positions B, D, E, and G on adenosylcobyrinic A,C-diamide. NH(2) groups are provided by glutamine, and one molecule of ATP is hydrogenolyzed for each amidation. The chain is Cobyric acid synthase from Dehalococcoides mccartyi (strain ATCC BAA-2266 / KCTC 15142 / 195) (Dehalococcoides ethenogenes (strain 195)).